Consider the following 331-residue polypeptide: ESX-3 secretion system protein EccE3 (331 aa).

2 helical membrane passes run 11–31 (GRVT…PWQS) and 37–57 (LLGV…GLYF).

It belongs to the EccE family. As to quaternary structure, part of the ESX-3 / type VII secretion system (T7SS), which is composed of cytosolic and membrane components. The ESX-3 membrane complex is composed of EccB3, EccC3, EccD3 and EccE3.

Its subcellular location is the cell inner membrane. Its function is as follows. Part of the ESX-3 specialized secretion system, which is important for iron and zinc uptake or homeostasis. The sequence is that of ESX-3 secretion system protein EccE3 from Mycobacterium tuberculosis (strain CDC 1551 / Oshkosh).